The primary structure comprises 155 residues: MALYEHVFLARQDISAQQVDALVEQYKGVIEANGGKVGRIENWGLKSLTYRIKKNRKAHYALMDIDAPAAAVQEMERQMRISEDVLRYMTIAVEKHEEGPSAMMQKRDRDDRPREGGRGPREGGFGDRDRGPRPPREGGFGDRDDRPRRPREDRV.

A disordered region spans residues 94 to 155 (EKHEEGPSAM…RPRRPREDRV (62 aa)).

Belongs to the bacterial ribosomal protein bS6 family.

Its function is as follows. Binds together with bS18 to 16S ribosomal RNA. In Rhizobium johnstonii (strain DSM 114642 / LMG 32736 / 3841) (Rhizobium leguminosarum bv. viciae), this protein is Small ribosomal subunit protein bS6.